A 444-amino-acid chain; its full sequence is MRKVKPKLNLTSQTARIVNLSHDGRGIARVNGKATFIQGALPGEVVEFQYTRVKKDFDEGKLLSIVEPSTLRVEPKCPHYQMCGGCSLQHMSAEEQIRFKQSHLLDLLSRYGHTEPQSVLSPLTSHHWNYRNKARLSTRFVEKKQSTMVGFRERNNPRFITEINQCPILNSKIDTDIVHLRKLIDTMEDKHCIAQIEVAAGDNEVALIFRNLSPLTEQDELKIREFAQQFQYKVFLQPGGLDSVFCFYPSDAHAYLSYELPDYQITFQFHPNDFTQVNAELNRKMVTQAIQLMELKNSDIVLDLFCGLGNFSLPMAKHCSRVIGVEGNKNMVERAYMNAKSNHITNVDFYAANLDDVMEVRSLVNTSFSKVLIDPPRSGALEIVKQIDSIDPERIVYVSCNPITLARDTDILVNQKGYVLITAGVMDMFPHTAHVESIALFQKG.

Residues 5–64 (KPKLNLTSQTARIVNLSHDGRGIARVNGKATFIQGALPGEVVEFQYTRVKKDFDEGKLLS) form the TRAM domain. Positions 77, 83, 86, and 166 each coordinate [4Fe-4S] cluster. S-adenosyl-L-methionine is bound by residues Gln276, Phe305, Asn310, Glu326, Asn353, and Asp374. Residue Cys400 is the Nucleophile of the active site.

The protein belongs to the class I-like SAM-binding methyltransferase superfamily. RNA M5U methyltransferase family. RlmD subfamily.

The catalysed reaction is uridine(1939) in 23S rRNA + S-adenosyl-L-methionine = 5-methyluridine(1939) in 23S rRNA + S-adenosyl-L-homocysteine + H(+). In terms of biological role, catalyzes the formation of 5-methyl-uridine at position 1939 (m5U1939) in 23S rRNA. This chain is 23S rRNA (uracil(1939)-C(5))-methyltransferase RlmD, found in Legionella pneumophila (strain Paris).